An 84-amino-acid polypeptide reads, in one-letter code: Toxin To5 (84 aa).

Residues 1 to 19 (MKAIIFFIGCLMLIDLVAG) form the signal peptide. The LCN-type CS-alpha/beta domain maps to 21–82 (RSGYPVTQKG…IWGSYPNNCG (62 aa)). Cystine bridges form between Cys31/Cys81, Cys35/Cys57, Cys43/Cys62, and Cys47/Cys64. Cys81 carries the cysteine amide modification.

As to expression, expressed by the venom gland.

Its subcellular location is the secreted. In terms of biological role, beta toxins bind voltage-independently at site-4 of sodium channels (Nav) and shift the voltage of activation toward more negative potentials thereby affecting sodium channel activation and promoting spontaneous and repetitive firing. The chain is Toxin To5 from Tityus obscurus (Amazonian scorpion).